A 200-amino-acid polypeptide reads, in one-letter code: Recombination protein RecR (200 aa).

The C4-type zinc-finger motif lies at 57–72 (CRLCRTLTEEELCPQC). A Toprim domain is found at 80-175 (TLLCVVEGPT…VASRIAHGVP (96 aa)).

This sequence belongs to the RecR family.

May play a role in DNA repair. It seems to be involved in an RecBC-independent recombinational process of DNA repair. It may act with RecF and RecO. This chain is Recombination protein RecR, found in Pseudomonas syringae pv. tomato (strain ATCC BAA-871 / DC3000).